Reading from the N-terminus, the 209-residue chain is Octanoyltransferase (209 aa).

One can recognise a BPL/LPL catalytic domain in the interval 30–209 (DHKPEIIYLV…IQTEFNKIFK (180 aa)). Substrate is bound by residues 69–76 (RGGKFTFH), 143–145 (AIG), and 156–158 (GVA). The active-site Acyl-thioester intermediate is the cysteine 174.

The protein belongs to the LipB family.

It is found in the cytoplasm. The enzyme catalyses octanoyl-[ACP] + L-lysyl-[protein] = N(6)-octanoyl-L-lysyl-[protein] + holo-[ACP] + H(+). It functions in the pathway protein modification; protein lipoylation via endogenous pathway; protein N(6)-(lipoyl)lysine from octanoyl-[acyl-carrier-protein]: step 1/2. Catalyzes the transfer of endogenously produced octanoic acid from octanoyl-acyl-carrier-protein onto the lipoyl domains of lipoate-dependent enzymes. Lipoyl-ACP can also act as a substrate although octanoyl-ACP is likely to be the physiological substrate. The polypeptide is Octanoyltransferase (Rickettsia conorii (strain ATCC VR-613 / Malish 7)).